Here is a 255-residue protein sequence, read N- to C-terminus: Large ribosomal subunit protein uL4 (255 aa).

The protein belongs to the universal ribosomal protein uL4 family. In terms of assembly, part of the 50S ribosomal subunit.

Its function is as follows. One of the primary rRNA binding proteins, this protein initially binds near the 5'-end of the 23S rRNA. It is important during the early stages of 50S assembly. It makes multiple contacts with different domains of the 23S rRNA in the assembled 50S subunit and ribosome. In terms of biological role, forms part of the polypeptide exit tunnel. The protein is Large ribosomal subunit protein uL4 of Thermoplasma volcanium (strain ATCC 51530 / DSM 4299 / JCM 9571 / NBRC 15438 / GSS1).